Here is a 749-residue protein sequence, read N- to C-terminus: MAANKFATLIHRKTNRITLILVYAFLEWSLIFFILLNSLFSYFILRFADYFGLKRPCLFCSRLDRFFDASGKSPSHRDLLCDDHALQLHSKPVEESNCGFGEFHNDLVHRGCCVEKISSSLCAPIESDFGNLDYPIGDEGQIYNGLKFPRSIFVFEEEKVGSVNLNDSQEETEEKKVPQSHEKLEDDDVDEEFSCYVSSFDCKNKEIATEKEEENRVDLPIEVETAESAPKNLEFYIDEEDCHLIPVEFYKPSEEVREISDINGDFILDFGVEHDFTAAAETEEISDFASPGESKPEDAETNLVASEMENDDEETDAEVSIGTEIPDHEQIGDIPSHQLIPHHDDDDHEEETLEFKTVTIETKMPVLNINEERILEAQGSMESSHSSLHNAMFHLEQRVSVDGIECPEGVLTVDKLKFELQEERKALHALYEELEVERNASAVAASETMAMINRLHEEKAAMQMEALQYQRMMEEQAEFDQEALQLLNELMVNREKENAELEKELEVYRKRMEEYEAKEKMGMLRRRLRDSSVDSYRNNGDSDENSNGELQFKNVEGVTDWKYRENEMENTPVDVVLRLDECLDDYDGERLSILGRLKFLEEKLTDLNNEEDDEEEAKTFESNGSINGNEHIHGKETNGKHRVIKSKRLLPLFDAVDGEMENGLSNGNHHENGFDDSEKGENVTIEEEVDELYERLEALEADREFLRHCVGSLKKGDKGVHLLHEILQHLRDLRNIDLTRVRENGDMSL.

The chain crosses the membrane as a helical span at residues 17–37 (ITLILVYAFLEWSLIFFILLN). The interval 164–184 (NLNDSQEETEEKKVPQSHEKL) is disordered. Basic and acidic residues predominate over residues 173 to 184 (EEKKVPQSHEKL). The GTD-binding domain maps to 411-509 (LTVDKLKFEL…ELEKELEVYR (99 aa)). Positions 589–621 (ERLSILGRLKFLEEKLTDLNNEEDDEEEAKTFE) form a coiled coil. Residues 608–640 (NNEEDDEEEAKTFESNGSINGNEHIHGKETNGK) are disordered. A compositionally biased stretch (basic and acidic residues) spans 630–639 (EHIHGKETNG). Positions 676–710 (DSEKGENVTIEEEVDELYERLEALEADREFLRHCV) form a coiled coil.

In terms of assembly, interacts with myosin XI-K and XI-1. Expressed in leaf epidermal cells, roots and root hairs.

It localises to the endomembrane system. Membrane-anchored myosin receptors that define a distinct, plant-specific transport vesicle compartment. The protein is Myosin-binding protein 2 of Arabidopsis thaliana (Mouse-ear cress).